Consider the following 162-residue polypeptide: MTNASLDDLDRAILKLLKKDARLTIAEISNQLKKPESTVHFRIKKLQERGIIEKYTIIVGEPIKPRKLALVVLEIDMPIIEDFLERYIEYVTKTLSGFSEVLFVAKSGKEKIVALVGGESEESLLKFIEDNIESIPTLRNVMVFPISEIKKGDEIAGFLAEV.

In terms of domain architecture, HTH asnC-type spans 6–71 (LDDLDRAILK…PIKPRKLALV (66 aa)). Residues 25–44 (IAEISNQLKKPESTVHFRIK) constitute a DNA-binding region (H-T-H motif).

This is an uncharacterized protein from Pyrococcus abyssi (strain GE5 / Orsay).